Consider the following 128-residue polypeptide: Ribosome-binding factor A (128 aa).

It belongs to the RbfA family. Monomer. Binds 30S ribosomal subunits, but not 50S ribosomal subunits or 70S ribosomes.

It is found in the cytoplasm. Functionally, one of several proteins that assist in the late maturation steps of the functional core of the 30S ribosomal subunit. Associates with free 30S ribosomal subunits (but not with 30S subunits that are part of 70S ribosomes or polysomes). Required for efficient processing of 16S rRNA. May interact with the 5'-terminal helix region of 16S rRNA. This chain is Ribosome-binding factor A, found in Haemophilus influenzae (strain ATCC 51907 / DSM 11121 / KW20 / Rd).